The following is a 297-amino-acid chain: Bifunctional protein FolD (297 aa).

Residues 168-170, Thr195, and Val236 each bind NADP(+); that span reads GRG.

The protein belongs to the tetrahydrofolate dehydrogenase/cyclohydrolase family. In terms of assembly, homodimer.

It carries out the reaction (6R)-5,10-methylene-5,6,7,8-tetrahydrofolate + NADP(+) = (6R)-5,10-methenyltetrahydrofolate + NADPH. It catalyses the reaction (6R)-5,10-methenyltetrahydrofolate + H2O = (6R)-10-formyltetrahydrofolate + H(+). It functions in the pathway one-carbon metabolism; tetrahydrofolate interconversion. Catalyzes the oxidation of 5,10-methylenetetrahydrofolate to 5,10-methenyltetrahydrofolate and then the hydrolysis of 5,10-methenyltetrahydrofolate to 10-formyltetrahydrofolate. The chain is Bifunctional protein FolD from Bifidobacterium animalis subsp. lactis (strain AD011).